The sequence spans 448 residues: Probable glycine dehydrogenase (decarboxylating) subunit 1 (448 aa).

This sequence belongs to the GcvP family. N-terminal subunit subfamily. The glycine cleavage system is composed of four proteins: P, T, L and H. In this organism, the P 'protein' is a heterodimer of two subunits.

The enzyme catalyses N(6)-[(R)-lipoyl]-L-lysyl-[glycine-cleavage complex H protein] + glycine + H(+) = N(6)-[(R)-S(8)-aminomethyldihydrolipoyl]-L-lysyl-[glycine-cleavage complex H protein] + CO2. In terms of biological role, the glycine cleavage system catalyzes the degradation of glycine. The P protein binds the alpha-amino group of glycine through its pyridoxal phosphate cofactor; CO(2) is released and the remaining methylamine moiety is then transferred to the lipoamide cofactor of the H protein. The chain is Probable glycine dehydrogenase (decarboxylating) subunit 1 from Shouchella clausii (strain KSM-K16) (Alkalihalobacillus clausii).